The sequence spans 87 residues: UPF0250 protein CKO_02527 (87 aa).

Belongs to the UPF0250 family.

The chain is UPF0250 protein CKO_02527 from Citrobacter koseri (strain ATCC BAA-895 / CDC 4225-83 / SGSC4696).